Consider the following 139-residue polypeptide: Large ribosomal subunit protein bL20 (139 aa).

The protein belongs to the bacterial ribosomal protein bL20 family.

Functionally, binds directly to 23S ribosomal RNA and is necessary for the in vitro assembly process of the 50S ribosomal subunit. It is not involved in the protein synthesizing functions of that subunit. In Leuconostoc citreum (strain KM20), this protein is Large ribosomal subunit protein bL20.